The chain runs to 219 residues: Thiopurine S-methyltransferase (219 aa).

Tryptophan 10, leucine 45, glutamate 66, and arginine 123 together coordinate S-adenosyl-L-methionine.

This sequence belongs to the class I-like SAM-binding methyltransferase superfamily. TPMT family.

Its subcellular location is the cytoplasm. The catalysed reaction is S-adenosyl-L-methionine + a thiopurine = S-adenosyl-L-homocysteine + a thiopurine S-methylether.. The protein is Thiopurine S-methyltransferase of Shewanella frigidimarina (strain NCIMB 400).